The following is a 280-amino-acid chain: uncharacterized protein (280 aa).

Residues 1 to 51 (MATSLLLRHSSAVFFSQSSFFTKNKSFRSFTSIKMEKGEAENAVKTKKVFV) constitute a chloroplast transit peptide.

The protein belongs to the NAD(P)-dependent epimerase/dehydratase family.

The protein localises to the plastid. Its subcellular location is the chloroplast. It is found in the plastoglobule. This is an uncharacterized protein from Arabidopsis thaliana (Mouse-ear cress).